Reading from the N-terminus, the 91-residue chain is Acylphosphatase (91 aa).

An Acylphosphatase-like domain is found at 3–91; that stretch reads TVTMRVTGLV…EKFTRFSVVY (89 aa). Catalysis depends on residues Arg-18 and Asn-36.

It belongs to the acylphosphatase family.

The enzyme catalyses an acyl phosphate + H2O = a carboxylate + phosphate + H(+). The protein is Acylphosphatase (acyP) of Lactobacillus johnsonii (strain CNCM I-12250 / La1 / NCC 533).